Here is a 236-residue protein sequence, read N- to C-terminus: Ubiquinone biosynthesis O-methyltransferase (236 aa).

S-adenosyl-L-methionine is bound by residues arginine 39, glycine 59, aspartate 80, and methionine 124.

This sequence belongs to the methyltransferase superfamily. UbiG/COQ3 family.

The catalysed reaction is a 3-demethylubiquinol + S-adenosyl-L-methionine = a ubiquinol + S-adenosyl-L-homocysteine + H(+). It carries out the reaction a 3-(all-trans-polyprenyl)benzene-1,2-diol + S-adenosyl-L-methionine = a 2-methoxy-6-(all-trans-polyprenyl)phenol + S-adenosyl-L-homocysteine + H(+). It functions in the pathway cofactor biosynthesis; ubiquinone biosynthesis. In terms of biological role, O-methyltransferase that catalyzes the 2 O-methylation steps in the ubiquinone biosynthetic pathway. The chain is Ubiquinone biosynthesis O-methyltransferase from Shewanella sp. (strain W3-18-1).